A 651-amino-acid chain; its full sequence is Intraflagellar transport protein 70A (651 aa).

7 TPR repeats span residues 8–41 (DGEYTATIYRLIKEARYGEAIQVLSNELQKQYRS), 42–75 (RAGLSLLGYCYYQIQDFVNAADCYEQLIQISPEV), 140–173 (PESEINMGCLLYKEGHYEEACKKFITAMQVMGYK), 175–207 (DLSFNIALCYYSMKQYAPALKHIADIIERGIRE), 372–405 (LTEQMRKLTKQVQEARHNRDDEAVKKAVNEYDET), 410–443 (IPVLMAQAKIYWNMENYQMVEKIFRKSVEFCNEH), and 445–478 (IWKLNVAHVLFMQDNKYKEAIGFYEPIVKKHYDN). Positions 494–521 (YIMTSQNEEAEELMRKIEKEEEQIAYEN) form a coiled coil. The stretch at 530–563 (CIVNLVIGTLYCAKGNYEFGISRVIKSLEPYNKK) is one TPR 8 repeat.

It belongs to the TTC30/dfy-1/fleer family.

It localises to the cell projection. The protein localises to the cilium. Functionally, required for polyglutamylation of axonemal tubulin. Plays a role in anterograde intraflagellar transport (IFT), the process by which cilia precursors are transported from the base of the cilium to the site of their incorporation at the tip. In Xenopus laevis (African clawed frog), this protein is Intraflagellar transport protein 70A (ift70a).